We begin with the raw amino-acid sequence, 134 residues long: Cytochrome b5 isoform B (134 aa).

Positions Ala-5 to Asp-81 constitute a Cytochrome b5 heme-binding domain. Heme is bound by residues His-40 and His-64. A helical transmembrane segment spans residues Phe-107–Ile-127.

This sequence belongs to the cytochrome b5 family. Interacts with CER1, FAH1, FAH2 and BI-1.

Its subcellular location is the endoplasmic reticulum membrane. In terms of biological role, membrane bound hemoprotein which function as an electron carrier for several membrane bound oxygenases, including fatty acid desaturases. The chain is Cytochrome b5 isoform B from Arabidopsis thaliana (Mouse-ear cress).